The following is a 38-amino-acid chain: Large ribosomal subunit protein bL36 (38 aa).

It belongs to the bacterial ribosomal protein bL36 family.

The sequence is that of Large ribosomal subunit protein bL36 from Buchnera aphidicola subsp. Acyrthosiphon pisum (strain 5A).